Consider the following 688-residue polypeptide: Potassium-transporting ATPase ATP-binding subunit (688 aa).

4 helical membrane-spanning segments follow: residues 34-54 (PVMF…LAIL), 62-82 (AMFT…ANMA), 219-239 (VALT…TATL), and 260-280 (VLVA…LSAI). D313 (4-aspartylphosphate intermediate) is an active-site residue. ATP is bound by residues D350, E354, 383–390 (FSAQTRMS), and K401. Mg(2+) is bound by residues D524 and D528. The next 3 membrane-spanning stretches (helical) occupy residues 594–614 (FAII…LNIM), 622–642 (AILS…PLAL), and 662–682 (IYGL…DLLL).

This sequence belongs to the cation transport ATPase (P-type) (TC 3.A.3) family. Type IA subfamily. In terms of assembly, the system is composed of three essential subunits: KdpA, KdpB and KdpC.

The protein localises to the cell inner membrane. It carries out the reaction K(+)(out) + ATP + H2O = K(+)(in) + ADP + phosphate + H(+). Its function is as follows. Part of the high-affinity ATP-driven potassium transport (or Kdp) system, which catalyzes the hydrolysis of ATP coupled with the electrogenic transport of potassium into the cytoplasm. This subunit is responsible for energy coupling to the transport system and for the release of the potassium ions to the cytoplasm. In Yersinia pseudotuberculosis serotype O:1b (strain IP 31758), this protein is Potassium-transporting ATPase ATP-binding subunit.